Here is a 211-residue protein sequence, read N- to C-terminus: Protein-L-isoaspartate O-methyltransferase (211 aa).

Residue Ser-62 is part of the active site.

The protein belongs to the methyltransferase superfamily. L-isoaspartyl/D-aspartyl protein methyltransferase family.

The protein localises to the cytoplasm. It carries out the reaction [protein]-L-isoaspartate + S-adenosyl-L-methionine = [protein]-L-isoaspartate alpha-methyl ester + S-adenosyl-L-homocysteine. Its function is as follows. Catalyzes the methyl esterification of L-isoaspartyl residues in peptides and proteins that result from spontaneous decomposition of normal L-aspartyl and L-asparaginyl residues. It plays a role in the repair and/or degradation of damaged proteins. This chain is Protein-L-isoaspartate O-methyltransferase, found in Shewanella sp. (strain MR-4).